The following is a 294-amino-acid chain: MAAAVSSVVRRVEELGDLAQAHIQQLSEAAGEDDHFLIRASAALEKLKLLCGEEKECSNPSNLLELYTQAILDMTYFEENKLVDEDFPEDSSSQKVKELISFLSEPEILVKENNMHPKHCNLLGDELLECLSWRRGALLYMYCHSLTKRREWLLRKSSLLKKYLLDGISYLLQMLNYRCPIQLNEGVSFQDLDTAKLLSAGIFSDIHLLAMMYSGEMCYWGSKYCADQQPENHEVDTSVSGAGCTTYKEPLDFREVGEKILKKYVSVCEGPLKEQEWNTTNAKQILNFFHHRCN.

A2 is subject to N-acetylalanine.

It belongs to the RIMOC1 family. As to quaternary structure, interacts with the MON1A-CCZ1B complex. Interacts with GDP-bound RAB7A and promotes its interaction with the MON1A-CCZ1B complex.

It localises to the cytoplasm. It is found in the cytosol. Plays an important role in the removal of damaged mitochondria via mitophagy by controlling the stability and localization of RAB7A. Required for the recruitment of RAB7A and ATG9A vesicles to damaged mitochondria and promotes the stability of RAB7A by inhibiting its proteasomal degradation during mitophagy. The protein is RAB7A-interacting MON1-CCZ1 complex subunit 1 of Homo sapiens (Human).